Reading from the N-terminus, the 565-residue chain is Polyadenylate-binding protein 1-A (565 aa).

RRM domains are found at residues 10 to 88, 98 to 175, 188 to 265, and 284 to 362; these read SSLY…WSQR, GNVF…PFKS, TNVF…RAQK, and VNLY…LAQR. Residues 435–466 form a disordered region; that stretch reads YARGQPRQNGPRQNGGQPRQNGPRPDVSGAQP. Over residues 440 to 454 the composition is skewed to polar residues; it reads PRQNGPRQNGGQPRQ. The 77-residue stretch at 489 to 565 folds into the PABC domain; the sequence is SALNLQSIIN…REALEVLGSN (77 aa).

It belongs to the polyadenylate-binding protein type-1 family.

It is found in the cytoplasm. The protein resides in the nucleus. Functionally, binds the poly(A) tail of mRNA. Appears to be an important mediator of the multiple roles of the poly(A) tail in mRNA biogenesis, stability and translation. The chain is Polyadenylate-binding protein 1-A (pabpc1A) from Dictyostelium discoideum (Social amoeba).